The chain runs to 54 residues: UPF0391 membrane protein BAV1230 (54 aa).

The next 2 helical transmembrane spans lie at 5 to 25 and 27 to 47; these read AAVF…GIAA and AAGI…LSVL.

It belongs to the UPF0391 family.

It localises to the cell membrane. In Bordetella avium (strain 197N), this protein is UPF0391 membrane protein BAV1230.